The primary structure comprises 633 residues: FAD-binding monooxygenase andJ (633 aa).

FAD-binding positions include 117 to 120 (TWYW), 129 to 130 (DT), and Tyr-135. 127–129 (MCD) contacts NADP(+). Residues 269–275 (TGASAVQ) and 292–293 (RT) contribute to the NADP(+) site.

This sequence belongs to the FAD-binding monooxygenase family. Requires FAD as cofactor.

It functions in the pathway secondary metabolite biosynthesis; terpenoid biosynthesis. In terms of biological role, FAD-binding monooxygenase; part of the gene cluster that mediates the biosynthesis of anditomin, a fungal meroterpenoid. The first step of the pathway is the synthesis of 3,5-dimethylorsellinic acid (DMOA) by the polyketide synthase andM. DMOA is then converted to the phthalide compound 5,7-dihydroxy-4,6-dimethylphthalide (DHDMP) by the cytochrome P450 monooxygenase andK, which is further prenylated by the prenyltransferase andD to yield farnesyl-DHDMP. Further epoxidation by the FAD-dependent monooxygenase andE leads to epoxyfarnesyl-DHDMP. The next step involves the terpene cyclase andB that converts epoxyfarnesyl-DHDMP into preandiloid A through opening of the epoxide ring followed by the cyclization of the farnesyl moiety. Preandiloid A is in turn oxidized at the C-3 hydroxyl group to yield preandiloid B by the dehydrogenase andC. The dioxygenase andA is solely responsible for the dehydrogenation of preandiloid B leading to the enone preandiloid C, as well as for the intriguing structural rearrangement to generate the bicyclo[2.2.2]octane core, transforming preandiloid C into andiconin. FAD-binding monooxygenase andJ then produces andilesin D which is reduced by dehydrogenase andI to yield andilesin A. Action of acetyltransferase andG followed by a spontaneous acetate elimination leads then to andilesin B, which is in turn substrate of the short chain dehydrogenase andH to yield andilesin C. Finally, the dioxygenase andF catalyzes the transformation of andilesin C to anditomin. In Emericella variicolor (Aspergillus stellatus), this protein is FAD-binding monooxygenase andJ.